The chain runs to 89 residues: Small ribosomal subunit protein bS20 (89 aa).

It belongs to the bacterial ribosomal protein bS20 family.

Its function is as follows. Binds directly to 16S ribosomal RNA. This Sulfurovum sp. (strain NBC37-1) protein is Small ribosomal subunit protein bS20.